The following is a 104-amino-acid chain: Complex III assembly factor LYRM7 (104 aa).

Ser60 is modified (phosphoserine).

Belongs to the complex I LYR family. In terms of assembly, interacts with UQCRFS1.

It localises to the mitochondrion matrix. Its function is as follows. Assembly factor required for Rieske Fe-S protein UQCRFS1 incorporation into the cytochrome b-c1 (CIII) complex. Functions as a chaperone, binding to this subunit within the mitochondrial matrix and stabilizing it prior to its translocation and insertion into the late CIII dimeric intermediate within the mitochondrial inner membrane. This Pongo abelii (Sumatran orangutan) protein is Complex III assembly factor LYRM7 (LYRM7).